Here is a 484-residue protein sequence, read N- to C-terminus: L-amino-acid oxidase (484 aa).

A disulfide bridge connects residues Cys-8 and Cys-171. Residues 41–42 (MS), 61–62 (EA), and Arg-69 contribute to the FAD site. His-73 provides a ligand contact to Zn(2+). 85 to 88 (GPMR) contacts FAD. Position 88 (Arg-88) interacts with substrate. Residue Asn-170 is glycosylated (N-linked (GlcNAc...) asparagine). His-221 contacts substrate. An FAD-binding site is contributed by Val-259. Zn(2+) is bound at residue Glu-277. A disulfide bridge connects residues Cys-329 and Cys-410. Tyr-370 lines the substrate pocket. FAD contacts are provided by residues Glu-455 and 462–467 (GWIDST). 462–463 (GW) is a substrate binding site.

Belongs to the flavin monoamine oxidase family. FIG1 subfamily. In terms of assembly, homodimer; non-covalently linked. FAD serves as cofactor. Expressed by the venom gland.

It is found in the secreted. The catalysed reaction is an L-alpha-amino acid + O2 + H2O = a 2-oxocarboxylate + H2O2 + NH4(+). Functionally, catalyzes an oxidative deamination of predominantly hydrophobic and aromatic L-amino acids, thus producing hydrogen peroxide that may contribute to the diverse toxic effects of this enzyme. Exhibits diverse biological activities, such as hemorrhage, hemolysis, edema, apoptosis of vascular endothelial cells or tumor cell lines, antibacterial and antiparasitic activities, as well as regulation of platelet aggregation. Effects of snake L-amino oxidases on platelets are controversial, since they either induce aggregation or inhibit agonist-induced aggregation. These different effects are probably due to different experimental conditions. This chain is L-amino-acid oxidase, found in Vipera ammodytes ammodytes (Western sand viper).